Reading from the N-terminus, the 463-residue chain is Chromosomal replication initiator protein DnaA (463 aa).

The interval 1-90 (MSLSLWQQCL…KPLSQIISQT (90 aa)) is domain I, interacts with DnaA modulators. The tract at residues 91–126 (VTASVSAPSAPIVRVAAPSRPSWDNAAPQPELSYRS) is domain II. A domain III, AAA+ region region spans residues 127–343 (NVNPKHTFDN…GALNRVIANA (217 aa)). The ATP site is built by G171, G173, K174, and T175. The domain IV, binds dsDNA stretch occupies residues 344–463 (NFTGRAITID…FSNLIRTLSS (120 aa)).

It belongs to the DnaA family. Oligomerizes as a right-handed, spiral filament on DNA at oriC.

The protein localises to the cytoplasm. In terms of biological role, plays an essential role in the initiation and regulation of chromosomal replication. ATP-DnaA binds to the origin of replication (oriC) to initiate formation of the DNA replication initiation complex once per cell cycle. Binds the DnaA box (a 9 base pair repeat at the origin) and separates the double-stranded (ds)DNA. Forms a right-handed helical filament on oriC DNA; dsDNA binds to the exterior of the filament while single-stranded (ss)DNA is stabiized in the filament's interior. The ATP-DnaA-oriC complex binds and stabilizes one strand of the AT-rich DNA unwinding element (DUE), permitting loading of DNA polymerase. After initiation quickly degrades to an ADP-DnaA complex that is not apt for DNA replication. Binds acidic phospholipids. This Serratia proteamaculans (strain 568) protein is Chromosomal replication initiator protein DnaA.